A 268-amino-acid chain; its full sequence is Forkhead box protein R1 (268 aa).

A disordered region spans residues Glu-91–Arg-126. Positions Arg-149–Gln-248 form a DNA-binding region, fork-head.

As to expression, expressed in adult germ cells (at protein level). Expressed in heart, liver, lung and embryonic brain.

The protein localises to the nucleus. Its subcellular location is the cytoplasm. The protein resides in the perinuclear region. Transcription factor which acts as both an activator and a repressor. Activates transcription of a number of genes including the heat shock chaperones HSPA1A and HSPA6 and the antioxidant NADPH-dependent reductase DHRS2 which are involved in protection against oxidative stress. Required for normal brain development. This chain is Forkhead box protein R1 (Foxr1), found in Mus musculus (Mouse).